The following is a 114-amino-acid chain: Ig heavy chain V region GOM (114 aa).

In terms of domain architecture, Ig-like spans Glu-1–Val-112.

This is Ig heavy chain V region GOM from Canis lupus familiaris (Dog).